Here is a 381-residue protein sequence, read N- to C-terminus: Cobalt-precorrin-5B C(1)-methyltransferase (381 aa).

It belongs to the CbiD family.

The catalysed reaction is Co-precorrin-5B + S-adenosyl-L-methionine = Co-precorrin-6A + S-adenosyl-L-homocysteine. Its pathway is cofactor biosynthesis; adenosylcobalamin biosynthesis; cob(II)yrinate a,c-diamide from sirohydrochlorin (anaerobic route): step 6/10. Its function is as follows. Catalyzes the methylation of C-1 in cobalt-precorrin-5B to form cobalt-precorrin-6A. This chain is Cobalt-precorrin-5B C(1)-methyltransferase, found in Methylococcus capsulatus (strain ATCC 33009 / NCIMB 11132 / Bath).